Consider the following 101-residue polypeptide: Small ribosomal subunit protein uS14 (101 aa).

Belongs to the universal ribosomal protein uS14 family. Part of the 30S ribosomal subunit. Contacts proteins S3 and S10.

Binds 16S rRNA, required for the assembly of 30S particles and may also be responsible for determining the conformation of the 16S rRNA at the A site. This chain is Small ribosomal subunit protein uS14, found in Aliivibrio fischeri (strain MJ11) (Vibrio fischeri).